We begin with the raw amino-acid sequence, 99 residues long: Large ribosomal subunit protein bL25 (99 aa).

This sequence belongs to the bacterial ribosomal protein bL25 family. Part of the 50S ribosomal subunit; part of the 5S rRNA/L5/L18/L25 subcomplex. Contacts the 5S rRNA. Binds to the 5S rRNA independently of L5 and L18.

In terms of biological role, this is one of the proteins that binds to the 5S RNA in the ribosome where it forms part of the central protuberance. In Nostoc sp. (strain PCC 7120 / SAG 25.82 / UTEX 2576), this protein is Large ribosomal subunit protein bL25.